An 89-amino-acid chain; its full sequence is MKDSYISIVIAYLMVTFILVSSMPIEGEKGELGPHRLPCPPEYANYCFNGKCVHFVAQDEPGKPCYSCICDKFYIGKRCGTLDLTNPDF.

Positions 1–30 (MKDSYISIVIAYLMVTFILVSSMPIEGEKG) are cleaved as a signal peptide. Disulfide bonds link C39–C52, C47–C68, and C70–C79. Residues 43–80 (YANYCFNGKCVHFVAQDEPGKPCYSCICDKFYIGKRCG) enclose the EGF-like domain.

It belongs to the EGF domain peptide family. As to expression, expressed by the venom gland.

The protein resides in the secreted. Functionally, ant peptide with probable defensive activity which acts as a potent agonist of the mammalian epidermal growth factor receptor (EGFR). Mimics, both structurally and functionally, vertebrate epidermal growth factor (EGF) peptide hormones. In vivo, intraplantar injection in mice causes long-lasting (several days) hypersensitivity of the injected paw to both mechanical and thermal stimuli. Its long-lasting effect is unusual for venom toxins whose effects are usually immediate. One possible explanation is that it would reduce the duration of a nest attack, discourage future attacks, or enhance the actions of subsequent exposure to other pain-inducing venom peptides. This Rhytidoponera metallica (Australian green-headed ant) protein is OMEGA-ectatommitoxin(02)-Rm1b.